A 654-amino-acid polypeptide reads, in one-letter code: Threonine--tRNA ligase (654 aa).

The 63-residue stretch at 1-63 (MASINVKFPD…TTDGSIEIIA (63 aa)) folds into the TGS domain. Residues 248-546 (DHRVIGNELD…LTEIYKGAFP (299 aa)) form a catalytic region. Zn(2+)-binding residues include C342, H393, and H523.

This sequence belongs to the class-II aminoacyl-tRNA synthetase family. In terms of assembly, homodimer. Requires Zn(2+) as cofactor.

It localises to the cytoplasm. The catalysed reaction is tRNA(Thr) + L-threonine + ATP = L-threonyl-tRNA(Thr) + AMP + diphosphate + H(+). Catalyzes the attachment of threonine to tRNA(Thr) in a two-step reaction: L-threonine is first activated by ATP to form Thr-AMP and then transferred to the acceptor end of tRNA(Thr). Also edits incorrectly charged L-seryl-tRNA(Thr). This chain is Threonine--tRNA ligase, found in Lactiplantibacillus plantarum (strain ATCC BAA-793 / NCIMB 8826 / WCFS1) (Lactobacillus plantarum).